A 1310-amino-acid polypeptide reads, in one-letter code: Contactin-associated protein-like 4 (1310 aa).

The first 27 residues, 1 to 27 (MNMGSVAGAVLKMLLLLSTQNWNRVEA), serve as a signal peptide directing secretion. The Extracellular segment spans residues 28–1243 (GNSYDCDEPL…LTHAIKSDSA (1216 aa)). Residues 33–179 (CDEPLVSALP…IGMRIEVFGC (147 aa)) form the F5/8 type C domain. A disulfide bridge links Cys-33 with Cys-179. Residues 214-346 (FKTMESDGIL…NLFYNGVDVI (133 aa)) form the Laminin G-like 1 domain. N-linked (GlcNAc...) asparagine glycans are attached at residues Asn-262, Asn-287, and Asn-361. 4 disulfides stabilise this stretch: Cys-334–Cys-366, Cys-517–Cys-549, Cys-555–Cys-566, and Cys-560–Cys-575. In terms of domain architecture, Laminin G-like 2 spans 400–529 (FRTWNKAGLL…LISINNKMVD (130 aa)). Asn-540 carries N-linked (GlcNAc...) asparagine glycosylation. Residues 551 to 588 (ISDRCLPNSCEHGGECSQSWSTFHCNCTNTGYTGATCH) enclose the EGF-like 1 domain. Residue Asn-576 is glycosylated (N-linked (GlcNAc...) asparagine). Cys-577 and Cys-587 are oxidised to a cystine. Residues 589 to 794 (SSVYEQSCEA…LLCRGDRPFW (206 aa)) form the Fibrinogen C-terminal domain. N-linked (GlcNAc...) asparagine glycosylation is found at Asn-604, Asn-627, Asn-639, Asn-708, and Asn-750. The 166-residue stretch at 795 to 960 (NAASFNTEAS…TVTPGVQPGC (166 aa)) folds into the Laminin G-like 3 domain. 4 disulfide bridges follow: Cys-933–Cys-960, Cys-964–Cys-977, Cys-971–Cys-986, and Cys-988–Cys-998. Positions 960–999 (CRGHCGSYGKLCRHGGKCREKPSGFFCDCSSSAYAGPFCS) constitute an EGF-like 2 domain. N-linked (GlcNAc...) asparagine glycosylation is found at Asn-1019, Asn-1025, and Asn-1075. The Laminin G-like 4 domain maps to 1048–1204 (FRTTRAPSLL…VTGHVTESSC (157 aa)). Residues Cys-1169 and Cys-1204 are joined by a disulfide bond. A helical transmembrane segment spans residues 1244–1264 (VIGGLIAVVIFILLCVSAIAV). Topologically, residues 1265–1310 (RIYQQKRLYKRNEAKRSENVDSAEAVLKSELHIQNAVGENQKEYFF) are cytoplasmic.

This sequence belongs to the neurexin family. As to quaternary structure, interacts with TIAM1. As to expression, specifically present in developing cortical interneurons: highly expressed in cortical parvalbumin (PV) cells and midbrain dopaminergic neurons and is localized presynaptically (at protein level). Also present in the substantia nigra pars compacta (SnC) and ventral tegmental area (VTA) midbrain dopaminergic projection populations.

It localises to the presynaptic cell membrane. Its function is as follows. Presynaptic protein involved in both dopaminergic synaptic transmission and GABAergic system, thereby participating in the structural maturation of inhibitory interneuron synapses. Involved in the dopaminergic synaptic transmission by attenuating dopamine release through a presynaptic mechanism. Also participates in the GABAergic system. In Mus musculus (Mouse), this protein is Contactin-associated protein-like 4 (Cntnap4).